A 910-amino-acid polypeptide reads, in one-letter code: Eukaryotic translation initiation factor 3 subunit C (910 aa).

The interval 1–21 (MSRFFANGSESESESSEEEIQ) is disordered. Residues 11–20 (SESESSEEEI) show a composition bias toward acidic residues. S34, S165, S176, and S185 each carry phosphoserine. Residues 157-281 (FREAPDQESE…KRAEDDEDGE (125 aa)) are disordered. Positions 162–186 (DQESEAEDEVVALESDGGDAGDDSD) are enriched in acidic residues. Residues 193–207 (EAAPKAVKSAPAKAA) show a composition bias toward low complexity. Residues 209 to 235 (ADDDDSDDSIDWDSDSESETESSDDEN) show a composition bias toward acidic residues. The segment covering 240–268 (MRERFLKRTTEKEEKDDDKRKDKRKEQKT) has biased composition (basic and acidic residues). Residues 639–815 (FHMHINLELL…ETVGMHRSEP (177 aa)) enclose the PCI domain. Residues 847–910 (FFQRGNMGNR…QQQVQTIDEE (64 aa)) form a disordered region. The segment covering 862 to 874 (NRNQNNQGGNWLG) has biased composition (low complexity). A compositionally biased stretch (basic residues) spans 882–891 (RNRNQRGHHK). Low complexity predominate over residues 895-910 (DRQQQQQQQVQTIDEE).

The protein belongs to the eIF-3 subunit C family. Component of the eukaryotic translation initiation factor 3 (eIF-3) complex. The eIF-3 complex interacts with pix.

It is found in the cytoplasm. Component of the eukaryotic translation initiation factor 3 (eIF-3) complex, which is involved in protein synthesis of a specialized repertoire of mRNAs and, together with other initiation factors, stimulates binding of mRNA and methionyl-tRNAi to the 40S ribosome. The eIF-3 complex specifically targets and initiates translation of a subset of mRNAs involved in cell proliferation. The chain is Eukaryotic translation initiation factor 3 subunit C from Drosophila sechellia (Fruit fly).